A 130-amino-acid chain; its full sequence is Large ribosomal subunit protein bL17 (130 aa).

Belongs to the bacterial ribosomal protein bL17 family. In terms of assembly, part of the 50S ribosomal subunit. Contacts protein L32.

The chain is Large ribosomal subunit protein bL17 from Shewanella loihica (strain ATCC BAA-1088 / PV-4).